The following is a 500-amino-acid chain: GTPase Der (500 aa).

EngA-type G domains are found at residues 3 to 166 (PVVA…MEEL) and 211 to 384 (IKLA…VSAT). GTP-binding positions include 9–16 (GRPNVGKS), 56–60 (DTGGI), 118–121 (NKID), 217–224 (GRPNVGKS), 264–268 (DTAGV), and 329–332 (NKWD). A KH-like domain is found at 385–469 (KRVGTSVLTR…PIRIQFQNSE (85 aa)). Positions 468-500 (SENPFEDRGGKLTMSQERQRKRLLGAVKNRNKK) are disordered. Over residues 486 to 500 (QRKRLLGAVKNRNKK) the composition is skewed to basic residues.

This sequence belongs to the TRAFAC class TrmE-Era-EngA-EngB-Septin-like GTPase superfamily. EngA (Der) GTPase family. In terms of assembly, associates with the 50S ribosomal subunit.

GTPase that plays an essential role in the late steps of ribosome biogenesis. This Aliivibrio fischeri (strain ATCC 700601 / ES114) (Vibrio fischeri) protein is GTPase Der.